The following is a 132-amino-acid chain: Small ribosomal subunit protein uS8 (132 aa).

It belongs to the universal ribosomal protein uS8 family. As to quaternary structure, part of the 30S ribosomal subunit. Contacts proteins S5 and S12.

Its function is as follows. One of the primary rRNA binding proteins, it binds directly to 16S rRNA central domain where it helps coordinate assembly of the platform of the 30S subunit. This Bartonella tribocorum (strain CIP 105476 / IBS 506) protein is Small ribosomal subunit protein uS8.